The following is a 353-amino-acid chain: uncharacterized protein (353 aa).

The first 24 residues, M1–G24, serve as a signal peptide directing secretion.

This sequence belongs to the chlamydial CPn_1058/CT_355/TC_0634 family.

This is an uncharacterized protein from Chlamydia trachomatis serovar D (strain ATCC VR-885 / DSM 19411 / UW-3/Cx).